The sequence spans 154 residues: NADPH-dependent 7-cyano-7-deazaguanine reductase (154 aa).

The Thioimide intermediate role is filled by Cys54. Asp61 (proton donor) is an active-site residue. Residues 76 to 78 (VES) and 95 to 96 (HE) contribute to the substrate site.

This sequence belongs to the GTP cyclohydrolase I family. QueF type 1 subfamily.

The protein resides in the cytoplasm. The catalysed reaction is 7-aminomethyl-7-carbaguanine + 2 NADP(+) = 7-cyano-7-deazaguanine + 2 NADPH + 3 H(+). Its pathway is tRNA modification; tRNA-queuosine biosynthesis. Functionally, catalyzes the NADPH-dependent reduction of 7-cyano-7-deazaguanine (preQ0) to 7-aminomethyl-7-deazaguanine (preQ1). In Porphyromonas gingivalis (strain ATCC 33277 / DSM 20709 / CIP 103683 / JCM 12257 / NCTC 11834 / 2561), this protein is NADPH-dependent 7-cyano-7-deazaguanine reductase.